A 791-amino-acid chain; its full sequence is MPPLLLLPAIYMLLFFRVSPTISLQEVHVNRETMGKIAVASKLMWCSAAVDILFLLDGSHSIGKGSFERSKRFAIAACDALDISPGRVRVGALQFGSTPHLEFPLDSFSTRQEVKESIKGIVFKGGRTETGLALKRLSRGFPGGRNGSVPQILIIVTDGKSQGPVALPAKQLRERGIVVFAVGVRFPRWDELLTLASEPKDRHVLLAEQVEDATNGLLSTLSSSALCTTADPDCRVEPHPCERRTLETVRELAGNALCWRGSRQADTVLALPCPFYSWKRVFQTHPANCYRTICPGPCDSQPCQNGGTCIPEGVDRYHCLCPLAFGGEVNCAPKLSLECRIDVLFLLDSSAGTTLGGFRRAKAFVKRFVQAVLREDSRARVGIASYGRNLMVAVPVGEYQHVPDLIRSLDSIPFSGGPTLTGSALLQVAEHGFGSASRTGQDRPRRVVVLLTESRSQDEVSGPAAHARARELLLLGVGSEILQAELVKITGSPKHVMVHTDPQDLFSQIPELQRRLCSQPRPGCQAQSLDLVFLLDASASVGRENFAQMQSFIRKCTLRFDVNPDVTQVGLVVYGSRVQTAFGLDTHPTRAAVLRAMSQAPYLGGVGSAGTALLHIEDKVMTVQRGARPGVPKAVVMLTGGSGAEDAAVPAQKLRGNGISVLVMSVGAVLREAVRRLAGPRDSLIHVAAYTDLPYHQDMLIEWLCREARLPVNLCKPSPCMNEGTCVLKNGSYRCECRGGWEGPHCENRILRGDAPMARSFHQEPAGLQGPTPSQQAPKHLRIGKALSSAK.

Positions 1–23 (MPPLLLLPAIYMLLFFRVSPTIS) are cleaved as a signal peptide. The 171-residue stretch at 51-221 (DILFLLDGSH…DATNGLLSTL (171 aa)) folds into the VWFA 1 domain. An N-linked (GlcNAc...) asparagine glycan is attached at Asn146. An EGF-like 1 domain is found at 295–332 (PGPCDSQPCQNGGTCIPEGVDRYHCLCPLAFGGEVNCA). 3 cysteine pairs are disulfide-bonded: Cys298–Cys309, Cys303–Cys319, and Cys321–Cys331. VWFA domains are found at residues 342 to 516 (DVLF…QRRL) and 530 to 704 (DLVF…IEWL). In terms of domain architecture, EGF-like 2 spans 711–747 (PVNLCKPSPCMNEGTCVLKNGSYRCECRGGWEGPHCE). 3 cysteine pairs are disulfide-bonded: Cys715–Cys726, Cys720–Cys735, and Cys737–Cys746. Residues 762–791 (HQEPAGLQGPTPSQQAPKHLRIGKALSSAK) form a disordered region.

As to quaternary structure, forms monomers and multimers. As to expression, detected in uterus, kidney, and skin. Also detected in intestine and lung of adult mice, and in calvaria, femur, brain, heart, intestine, skeletal muscle, and lung of newborn mice.

It is found in the secreted. The polypeptide is von Willebrand factor A domain-containing protein 2 (Vwa2) (Mus musculus (Mouse)).